The primary structure comprises 119 residues: Large ribosomal subunit protein bL20 (119 aa).

Belongs to the bacterial ribosomal protein bL20 family.

Its function is as follows. Binds directly to 23S ribosomal RNA and is necessary for the in vitro assembly process of the 50S ribosomal subunit. It is not involved in the protein synthesizing functions of that subunit. This is Large ribosomal subunit protein bL20 from Rhodospirillum centenum (strain ATCC 51521 / SW).